Here is a 554-residue protein sequence, read N- to C-terminus: Phosphomethylpyrimidine synthase (554 aa).

Substrate is bound by residues N188, M217, Y246, H282, 302–304, 343–346, and E382; these read SRG and DGLR. H386 is a Zn(2+) binding site. Y409 is a substrate binding site. H450 is a Zn(2+) binding site. [4Fe-4S] cluster is bound by residues C530, C533, and C538.

Belongs to the ThiC family. In terms of assembly, homodimer. The cofactor is [4Fe-4S] cluster.

It carries out the reaction 5-amino-1-(5-phospho-beta-D-ribosyl)imidazole + S-adenosyl-L-methionine = 4-amino-2-methyl-5-(phosphooxymethyl)pyrimidine + CO + 5'-deoxyadenosine + formate + L-methionine + 3 H(+). It functions in the pathway cofactor biosynthesis; thiamine diphosphate biosynthesis. Its function is as follows. Catalyzes the synthesis of the hydroxymethylpyrimidine phosphate (HMP-P) moiety of thiamine from aminoimidazole ribotide (AIR) in a radical S-adenosyl-L-methionine (SAM)-dependent reaction. In Coxiella burnetii (strain Dugway 5J108-111), this protein is Phosphomethylpyrimidine synthase.